We begin with the raw amino-acid sequence, 52 residues long: Large ribosomal subunit protein eL40 (52 aa).

4 residues coordinate Zn(2+): Cys20, Cys23, Cys34, and Cys39.

This sequence belongs to the eukaryotic ribosomal protein eL40 family. As to quaternary structure, component of the large ribosomal subunit. Mature ribosomes consist of a small (40S) and a large (60S) subunit. The 40S subunit contains about 32 different proteins and 1 molecule of RNA (18S). The 60S subunit contains 45 different proteins and 3 molecules of RNA (25S, 5.8S and 5S). Zn(2+) is required as a cofactor.

The protein resides in the cytoplasm. Component of the ribosome, a large ribonucleoprotein complex responsible for the synthesis of proteins in the cell. The small ribosomal subunit (SSU) binds messenger RNAs (mRNAs) and translates the encoded message by selecting cognate aminoacyl-transfer RNA (tRNA) molecules. The large subunit (LSU) contains the ribosomal catalytic site termed the peptidyl transferase center (PTC), which catalyzes the formation of peptide bonds, thereby polymerizing the amino acids delivered by tRNAs into a polypeptide chain. The nascent polypeptides leave the ribosome through a tunnel in the LSU and interact with protein factors that function in enzymatic processing, targeting, and the membrane insertion of nascent chains at the exit of the ribosomal tunnel. This Candida albicans (strain SC5314 / ATCC MYA-2876) (Yeast) protein is Large ribosomal subunit protein eL40.